Consider the following 89-residue polypeptide: Putative regulatory protein Nther_1328 (89 aa).

This sequence belongs to the RemA family.

In Natranaerobius thermophilus (strain ATCC BAA-1301 / DSM 18059 / JW/NM-WN-LF), this protein is Putative regulatory protein Nther_1328.